The primary structure comprises 160 residues: Putative NrdI-like protein (160 aa).

It belongs to the NrdI family.

The polypeptide is Putative NrdI-like protein (Streptococcus pyogenes serotype M1).